The sequence spans 142 residues: Large-conductance mechanosensitive channel (142 aa).

2 helical membrane-spanning segments follow: residues Val-14–Leu-34 and Phe-86–Val-106.

The protein belongs to the MscL family. As to quaternary structure, homopentamer.

It localises to the cell inner membrane. Channel that opens in response to stretch forces in the membrane lipid bilayer. May participate in the regulation of osmotic pressure changes within the cell. This Rhizorhabdus wittichii (strain DSM 6014 / CCUG 31198 / JCM 15750 / NBRC 105917 / EY 4224 / RW1) (Sphingomonas wittichii) protein is Large-conductance mechanosensitive channel.